A 1863-amino-acid polypeptide reads, in one-letter code: C-myc promoter-binding protein (1863 aa).

Residues 42–200 (KEPITDVSVI…AVYLCYKKSV (159 aa)) form the MABP domain. Residues 192–364 (VYLCYKKSVA…KVPFPSPQRP (173 aa)) enclose the uDENN domain. The cDENN domain maps to 385-521 (PLPLSGGKFS…PCKNLMNTLN (137 aa)). The region spanning 523-641 (LHQQLAKLQQ…CSFVSDKDAS (119 aa)) is the dDENN domain. S731 is modified (phosphoserine). 2 PPR repeats span residues 772 to 808 (WFIC…MDPP) and 809 to 843 (DEVC…GIDP). Residues 905 to 952 (DLGYNSLSKDEVRRGDTSTEDIQEEKDKKGSDCSSLSESESTKGSADC) form a disordered region. Basic and acidic residues predominate over residues 912–921 (SKDEVRRGDT). The Bipartite nuclear localization signal signature appears at 917-933 (RRGDTSTEDIQEEKDKK). Over residues 936-949 (DCSSLSESESTKGS) the composition is skewed to low complexity. Phosphoserine is present on residues S1015, S1035, S1099, S1151, and S1152. Residues 1075–1111 (TRPNTLDIGKPPLRSKRDSLEKESSDDDTPFDGSNYL) form a disordered region. Residues 1177–1202 (TEQQQKEEEEEDEDDSKSISTPSARR) are disordered. Phosphoserine occurs at positions 1225, 1240, and 1251. Disordered stretches follow at residues 1237-1306 (NKKS…SPSF) and 1348-1375 (SKDQ…TDED). A compositionally biased stretch (basic and acidic residues) spans 1269–1279 (TKSEEKPRDRL). S1281 carries the post-translational modification Phosphoserine. Composition is skewed to polar residues over residues 1297–1306 (DTLTHSSPSF) and 1348–1371 (SKDQ…STSL). Phosphoserine occurs at positions 1508, 1587, 1589, and 1591.

Expressed ubiquitously. Highest expression in bone marrow, medium in peripheral blood lymphocytes and lowest in spleen. In brain, breast, and prostate, higher expression was seen in normal cells than in tumor cells. Expression is regulated in a growth- and cell cycle-dependent manner.

It localises to the nucleus. Functionally, probable guanine nucleotide exchange factor (GEF) which may activate RAB10. Promotes the exchange of GDP to GTP, converting inactive GDP-bound Rab proteins into their active GTP-bound form. According to PubMed:8056341, it may bind to ISRE-like element (interferon-stimulated response element) of MYC P2 promoter. This is C-myc promoter-binding protein (DENND4A) from Homo sapiens (Human).